The sequence spans 257 residues: Snake venom serine protease KN1 (257 aa).

The first 18 residues, Met1 to Ala18, serve as a signal peptide directing secretion. Positions Gln19–Leu24 are excised as a propeptide. The Peptidase S1 domain occupies Val25–Ala248. Cystine bridges form between Cys31-Cys162, Cys49-Cys65, Cys141-Cys209, Cys173-Cys188, and Cys199-Cys224. The Charge relay system role is filled by His64. Residue Asn102 is glycosylated (N-linked (GlcNAc...) asparagine). The active-site Charge relay system is the Asp109. 2 N-linked (GlcNAc...) asparagine glycosylation sites follow: Asn120 and Asn121. The Charge relay system role is filled by Ser203.

Belongs to the peptidase S1 family. Snake venom subfamily. As to quaternary structure, monomer. Expressed by the venom gland.

Its subcellular location is the secreted. Functionally, snake venom serine protease that may act in the hemostasis system of the prey. This chain is Snake venom serine protease KN1, found in Trimeresurus stejnegeri (Chinese green tree viper).